We begin with the raw amino-acid sequence, 835 residues long: Phenylalanine--tRNA ligase beta subunit (835 aa).

Positions 44 to 158 (GPVDGPLTVG…LPGADGADVL (115 aa)) constitute a tRNA-binding domain. The 80-residue stretch at 414-493 (WSLPPIRIAV…RLEGLEVIRS (80 aa)) folds into the B5 domain. 4 residues coordinate Mg(2+): aspartate 471, aspartate 477, glutamate 480, and glutamate 481. The FDX-ACB domain occupies 741-834 (SPFPAVLQDV…AAERVGATLR (94 aa)).

It belongs to the phenylalanyl-tRNA synthetase beta subunit family. Type 1 subfamily. In terms of assembly, tetramer of two alpha and two beta subunits. Mg(2+) is required as a cofactor.

The protein localises to the cytoplasm. It carries out the reaction tRNA(Phe) + L-phenylalanine + ATP = L-phenylalanyl-tRNA(Phe) + AMP + diphosphate + H(+). The protein is Phenylalanine--tRNA ligase beta subunit of Mycobacterium leprae (strain TN).